The sequence spans 259 residues: Acyl-[acyl-carrier-protein]--UDP-N-acetylglucosamine O-acyltransferase (259 aa).

This sequence belongs to the transferase hexapeptide repeat family. LpxA subfamily. Homotrimer.

The protein localises to the cytoplasm. The catalysed reaction is a (3R)-hydroxyacyl-[ACP] + UDP-N-acetyl-alpha-D-glucosamine = a UDP-3-O-[(3R)-3-hydroxyacyl]-N-acetyl-alpha-D-glucosamine + holo-[ACP]. The protein operates within glycolipid biosynthesis; lipid IV(A) biosynthesis; lipid IV(A) from (3R)-3-hydroxytetradecanoyl-[acyl-carrier-protein] and UDP-N-acetyl-alpha-D-glucosamine: step 1/6. In terms of biological role, involved in the biosynthesis of lipid A, a phosphorylated glycolipid that anchors the lipopolysaccharide to the outer membrane of the cell. The chain is Acyl-[acyl-carrier-protein]--UDP-N-acetylglucosamine O-acyltransferase from Psychrobacter sp. (strain PRwf-1).